A 201-amino-acid chain; its full sequence is Recombination protein RecR (201 aa).

The segment at 60-75 adopts a C4-type zinc-finger fold; it reads CKVCGNIDTQNPCTVC. A Toprim domain is found at 83-178; sequence SIIVVVADVA…KVTRLAHGVP (96 aa).

Belongs to the RecR family.

Functionally, may play a role in DNA repair. It seems to be involved in an RecBC-independent recombinational process of DNA repair. It may act with RecF and RecO. This chain is Recombination protein RecR, found in Rhodopseudomonas palustris (strain BisB18).